Consider the following 107-residue polypeptide: Multidrug resistance protein mmr (107 aa).

Transmembrane regions (helical) follow at residues 2–19 (AYLFLFCAIFVEVVATTL), 29–51 (LVPTLACLAGYAVTFTLLALSIS), 58–77 (VAYALWSAIGTAAIVLIAVL), and 82–104 (PVSVAKVVGVALIIVGVITLNLA).

This sequence belongs to the drug/metabolite transporter (DMT) superfamily. Small multidrug resistance (SMR) (TC 2.A.7.1) family. Mmr subfamily.

It is found in the cell membrane. Multidrug efflux pump. Confers resistance to tetraphenylphosphonium (TPP), erythromycin, ethidium bromide, acriflavine, safranin O and pyronin Y. The sequence is that of Multidrug resistance protein mmr (mmr) from Mycobacterium leprae (strain TN).